A 597-amino-acid chain; its full sequence is Large ribosomal subunit assembly factor BipA (597 aa).

A tr-type G domain is found at 3-198 (LPIRNVAIIA…AILHHVPPPA (196 aa)). GTP-binding positions include 15–20 (DHGKTT) and 128–131 (NKID).

It belongs to the TRAFAC class translation factor GTPase superfamily. Classic translation factor GTPase family. BipA subfamily. In terms of assembly, monomer.

Its subcellular location is the cytoplasm. It carries out the reaction GTP + H2O = GDP + phosphate + H(+). Its function is as follows. A 50S ribosomal subunit assembly protein with GTPase activity, required for 50S subunit assembly at low temperatures, may also play a role in translation. Binds GTP and analogs. Binds the 70S ribosome between the 30S and 50S subunits, in a similar position as ribosome-bound EF-G; it contacts a number of ribosomal proteins, both rRNAs and the A-site tRNA. In Synechocystis sp. (strain ATCC 27184 / PCC 6803 / Kazusa), this protein is Large ribosomal subunit assembly factor BipA.